The sequence spans 406 residues: Tyrosine--tRNA ligase (406 aa).

An L-tyrosine-binding site is contributed by Tyr-35. The 'HIGH' region signature appears at 40-49 (ATSTSLHIGH). L-tyrosine contacts are provided by Tyr-166 and Gln-170. The 'KMSKS' region signature appears at 226–230 (KMGKS). Lys-229 is an ATP binding site. An S4 RNA-binding domain is found at 341–405 (ILLVDLMVSS…IGKKKILRII (65 aa)).

Belongs to the class-I aminoacyl-tRNA synthetase family. TyrS type 1 subfamily. As to quaternary structure, homodimer.

It is found in the cytoplasm. It catalyses the reaction tRNA(Tyr) + L-tyrosine + ATP = L-tyrosyl-tRNA(Tyr) + AMP + diphosphate + H(+). Functionally, catalyzes the attachment of tyrosine to tRNA(Tyr) in a two-step reaction: tyrosine is first activated by ATP to form Tyr-AMP and then transferred to the acceptor end of tRNA(Tyr). This is Tyrosine--tRNA ligase from Borrelia hermsii (strain HS1 / DAH).